We begin with the raw amino-acid sequence, 387 residues long: MKKEKADKAQEKETDQRKQAIDAALGQIEKQFGKGSIMRLGADTRMAEMNVVSTGSLDLDIALGIGGFPSGRIVEIYGPESSGKTTLTLSAIAETQKKGGIAAFIDAEHALDPSYAKKLGVNVDDLLVAQPDNGEEALEICESLVRSNAIDLIVIDSVAALVPKAEIEGDMGDSHMGLQARLMSQALRKLTGTISKSNTTVIFINQIRMKIGVMFGSPETTTGGNALKFYASIRLDIRRIETLKEKEEPVGNRVRVKVVKNKCAPPFRQAEFDIMYANGINRESSLIDLAVRHDLVAKAGSWYSYGGEKIGQGKEQVKNFFLENPDIAFKIENQVRDLNSLPLMDQSKIQTREVKSIERDPKETKETKSKQPVSFSTEAEVDIAVGE.

78-85 contributes to the ATP binding site; that stretch reads GPESSGKT. Residues 350–369 are compositionally biased toward basic and acidic residues; the sequence is QTREVKSIERDPKETKETKS. Residues 350 to 387 are disordered; the sequence is QTREVKSIERDPKETKETKSKQPVSFSTEAEVDIAVGE.

The protein belongs to the RecA family.

It localises to the cytoplasm. Functionally, can catalyze the hydrolysis of ATP in the presence of single-stranded DNA, the ATP-dependent uptake of single-stranded DNA by duplex DNA, and the ATP-dependent hybridization of homologous single-stranded DNAs. It interacts with LexA causing its activation and leading to its autocatalytic cleavage. The protein is Protein RecA of Leptospira meyeri.